The following is a 185-amino-acid chain: Photosystem I assembly protein Ycf4 (185 aa).

Helical transmembrane passes span 24-44 (YIIG…SISS) and 66-86 (IIMG…WYLV).

The protein belongs to the Ycf4 family.

The protein localises to the cellular thylakoid membrane. Its function is as follows. Seems to be required for the assembly of the photosystem I complex. The chain is Photosystem I assembly protein Ycf4 from Prochlorococcus marinus (strain MIT 9301).